We begin with the raw amino-acid sequence, 804 residues long: Leucine--tRNA ligase (804 aa).

Residues 39–50 carry the 'HIGH' region motif; the sequence is PFPSGKGLHVGH. Positions 573 to 577 match the 'KMSKS' region motif; it reads KMSKS. Lys576 provides a ligand contact to ATP.

The protein belongs to the class-I aminoacyl-tRNA synthetase family.

It localises to the cytoplasm. It carries out the reaction tRNA(Leu) + L-leucine + ATP = L-leucyl-tRNA(Leu) + AMP + diphosphate. The protein is Leucine--tRNA ligase of Lactobacillus acidophilus (strain ATCC 700396 / NCK56 / N2 / NCFM).